We begin with the raw amino-acid sequence, 776 residues long: E3 ubiquitin-protein ligase UHRF1 (776 aa).

Residues 1 to 78 (MWIQVRTMDG…VQLLVRQAVA (78 aa)) enclose the Ubiquitin-like domain. The interval 88 to 126 (AELSDSDSGCGSAQSESDKGSTHGESDVQSAGASGQTDT) is disordered. The span at 93–102 (SDSGCGSAQS) shows a compositional bias: polar residues. The segment covering 103 to 113 (ESDKGSTHGES) has biased composition (basic and acidic residues). Polar residues predominate over residues 114–126 (DVQSAGASGQTDT). Tudor-like regions lie at residues 135 to 201 (GFYK…PRAR) and 208 to 277 (QLEP…IEEP). The disordered stretch occupies residues 278–298 (GSAEGPGASSDSPLKKGSNGP). Residues 290 to 299 (PLKKGSNGPE) are linker. Residues 297–364 (GPECKVCKDD…DWYCPDCRND (68 aa)) form a PHD-type zinc finger. Histone H3R2me0 binding stretches follow at residues 331-335 (CDECD) and 351-353 (PDD). In terms of domain architecture, YDG spans 417–580 (GPVPGVPVGT…FLVWRYLLKR (164 aa)). The tract at residues 443 to 444 (HV) is required to promote base flipping. Residues 461–462 (AG) and D467 contribute to the DNA site. 2 required for formation of a 5-methylcytosine-binding pocket regions span residues 464–467 (YEDD) and 476–479 (YTGS). The segment at 617–660 (EKEKENKNEDDIEETPTKGKRKRKSQSMEEKSSPTKGTPKKMKV) is disordered. At S649 the chain carries Phosphoserine; by CDK2. The RING-type zinc-finger motif lies at 706–745 (CICCQEVVYQPITTECQHNVCRECLQRSFKAKVYTCPACR).

Phosphorylation at Ser-649 is required for gastrulation. Expressed in proliferating tissues. Highly expressed 24-48 hours after fertilization (hpf) in rapidly proliferating tissues, including the tectum, retina and brachial arches. Preferentially expressed in the liver bud and expression is maintained in the fully developed liver. Also expressed in the proximal gut. In adult, the highest expression is detected in testis.

It is found in the nucleus. Its subcellular location is the cytoplasm. It catalyses the reaction S-ubiquitinyl-[E2 ubiquitin-conjugating enzyme]-L-cysteine + [acceptor protein]-L-lysine = [E2 ubiquitin-conjugating enzyme]-L-cysteine + N(6)-ubiquitinyl-[acceptor protein]-L-lysine.. It participates in protein modification; protein ubiquitination. In terms of biological role, multidomain protein that acts as a key epigenetic regulator by bridging DNA methylation and chromatin modification. Specifically recognizes and binds hemimethylated DNA at replication forks via its YDG domain and recruits dnmt1 methyltransferase to ensure faithful propagation of the DNA methylation patterns through DNA replication. In addition to its role in maintenance of DNA methylation, also plays a key role in chromatin modification: through its tudor-like regions and PHD-type zinc fingers, specifically recognizes and binds histone H3 trimethylated at 'Lys-9' (H3K9me3) and unmethylated at 'Arg-2' (H3R2me0), respectively, and recruits chromatin proteins. Enriched in pericentric heterochromatin where it recruits different chromatin modifiers required for this chromatin replication. Also localizes to euchromatic regions where it negatively regulates transcription possibly by impacting DNA methylation and histone modifications. Has E3 ubiquitin-protein ligase activity by mediating the ubiquitination of target proteins. However, it is still unclear how E3 ubiquitin-protein ligase activity is related to its role in chromatin in vivo. Required for pregastrula and lens development. This chain is E3 ubiquitin-protein ligase UHRF1 (uhrf1), found in Danio rerio (Zebrafish).